We begin with the raw amino-acid sequence, 544 residues long: Chaperonin GroEL (544 aa).

ATP is bound by residues 29-32 (TLGP), 86-90 (DGTTT), Gly-413, 476-478 (NAA), and Asp-492.

It belongs to the chaperonin (HSP60) family. Forms a cylinder of 14 subunits composed of two heptameric rings stacked back-to-back. Interacts with the co-chaperonin GroES.

The protein localises to the cytoplasm. It carries out the reaction ATP + H2O + a folded polypeptide = ADP + phosphate + an unfolded polypeptide.. Its function is as follows. Together with its co-chaperonin GroES, plays an essential role in assisting protein folding. The GroEL-GroES system forms a nano-cage that allows encapsulation of the non-native substrate proteins and provides a physical environment optimized to promote and accelerate protein folding. The protein is Chaperonin GroEL of Bacillus licheniformis (strain ATCC 14580 / DSM 13 / JCM 2505 / CCUG 7422 / NBRC 12200 / NCIMB 9375 / NCTC 10341 / NRRL NRS-1264 / Gibson 46).